We begin with the raw amino-acid sequence, 234 residues long: Ribosomal RNA small subunit methyltransferase G (234 aa).

S-adenosyl-L-methionine is bound by residues Gly96, Leu101, 119–121, 147–148, and Arg161; these read DAT and VE.

This sequence belongs to the methyltransferase superfamily. RNA methyltransferase RsmG family.

The protein localises to the cytoplasm. Functionally, specifically methylates the N7 position of a guanine in 16S rRNA. The protein is Ribosomal RNA small subunit methyltransferase G of Chlorobium chlorochromatii (strain CaD3).